The primary structure comprises 144 residues: Maximins 4/H3 type 1 (144 aa).

Residues 1–18 (MNFKYIIAVSFFIASAYA) form the signal peptide. Residues 19-43 (RSEEKDVQSLSQRDVLEEESLREIR) constitute a propeptide that is removed on maturation. Asparagine amide is present on Asn70. A propeptide spanning residues 74 to 123 (TAEDHEVMKRLEAVMRDLDSLDHPEEASERETRGFNQEEIANLFTKKEKR) is cleaved from the precursor. Ile143 carries the post-translational modification Isoleucine amide.

Belongs to the bombinin family. Expressed by the skin glands.

Its subcellular location is the secreted. Functionally, maximin-4 shows antibacterial activity against both Gram-positive and Gram-negative bacteria. It also shows antimicrobial activity against the fungus C.albicans, but not against A.flavus nor P.uticale. It has little hemolytic activity. It does not possess a significant cytotoxicity against tumor cell lines. It does not possess a significant anti-HIV activity. In terms of biological role, maximin-H3 shows antibacterial activity against both Gram-positive and Gram-negative bacteria. It also shows antimicrobial activity against the fungus C.albicans. Shows strong hemolytic activity. The protein is Maximins 4/H3 type 1 of Bombina maxima (Giant fire-bellied toad).